A 184-amino-acid chain; its full sequence is Peptide deformylase (184 aa).

Residues Cys99 and His141 each contribute to the Fe cation site. Glu142 is a catalytic residue. His145 is a binding site for Fe cation.

This sequence belongs to the polypeptide deformylase family. The cofactor is Fe(2+).

It catalyses the reaction N-terminal N-formyl-L-methionyl-[peptide] + H2O = N-terminal L-methionyl-[peptide] + formate. Removes the formyl group from the N-terminal Met of newly synthesized proteins. Requires at least a dipeptide for an efficient rate of reaction. N-terminal L-methionine is a prerequisite for activity but the enzyme has broad specificity at other positions. This is Peptide deformylase from Chlamydia abortus (strain DSM 27085 / S26/3) (Chlamydophila abortus).